A 772-amino-acid chain; its full sequence is Protocadherin beta-6 (772 aa).

An N-terminal signal peptide occupies residues 1 to 28; the sequence is METTLAKTPEKRQVVFLAILLLLWEAGS. 5 consecutive Cadherin domains span residues 31–133, 134–242, 243–346, 347–450, and 451–560; these read IRYS…SPEF, PDTE…APEF, VQSL…APKL, TISS…APAF, and TQTS…APFI. The Extracellular segment spans residues 31–690; that stretch reads IRYSIPEETE…QDEDMLTLYL (660 aa). C96 and C102 are joined by a disulfide. N-linked (GlcNAc...) asparagine glycosylation is present at N169. The O-linked (Man) serine glycan is linked to S223. O-linked (Man) threonine glycosylation occurs at T225. N417 is a glycosylation site (N-linked (GlcNAc...) asparagine). N-linked (GlcNAc...) asparagine glycosylation is present at N566. One can recognise a Cadherin 6 domain in the interval 575–675; sequence LPRAAEPGYL…SQPYLPLPEV (101 aa). A helical transmembrane segment spans residues 691–711; the sequence is VIALASVSSLFLLSVLLFVGV. Residues 712-772 are Cytoplasmic-facing; it reads RLCRRVREAS…DFKFLNHYSQ (61 aa).

Forms homodimers in trans (molecules expressed by two different cells). Forms promiscuous heterodimers in cis (at the plasma membrane of the same cell) with other protocadherins.

Its subcellular location is the cell membrane. Functionally, calcium-dependent cell-adhesion protein involved in cells self-recognition and non-self discrimination. Thereby, it is involved in the establishment and maintenance of specific neuronal connections in the brain. This is Protocadherin beta-6 from Mus musculus (Mouse).